The following is a 1470-amino-acid chain: Rap guanine nucleotide exchange factor (1470 aa).

2 disordered regions span residues 130–227 and 250–313; these read PTEP…SYND and HRRE…GGFM. Positions 173–183 are enriched in pro residues; that stretch reads MPPPPVPPRPL. Low complexity-rich tracts occupy residues 184–193 and 215–224; these read RLPQTAAKGP and TTSSSSSNTS. Residues 256 to 266 are compositionally biased toward polar residues; the sequence is NSVGGQAQNGI. Residues 275 to 292 show a composition bias toward low complexity; it reads RSTASSTTTEGETASNEG. A nucleoside 3',5'-cyclic phosphate is bound at residue 347-463; the sequence is AFAALPMSIK…IEKDRDGLTG (117 aa). The 115-residue stretch at 478–592 folds into the N-terminal Ras-GEF domain; that stretch reads CGQVLIKGKP…SLLNIACSVK (115 aa). The PDZ domain maps to 597-679; the sequence is QVILTRRKDD…LTLMLKNNVL (83 aa). The 88-residue stretch at 782–869 folds into the Ras-associating domain; the sequence is PEHVLKIYRN…SRYYLKNNSR (88 aa). In terms of domain architecture, Ras-GEF spans 894–1124; sequence NAQVVAAQLT…FENSNVATMR (231 aa). Residues 1176–1189 are compositionally biased toward polar residues; that stretch reads QTAHRGANSSSTAN. 4 disordered regions span residues 1176-1213, 1253-1326, 1347-1370, and 1422-1455; these read QTAH…DQSS, KVKG…NIPP, VIPT…PASS, and ATLP…RMGT. The span at 1198–1211 shows a compositional bias: low complexity; the sequence is PSSLSSQSAGSADQ. 2 stretches are compositionally biased toward polar residues: residues 1260 to 1274 and 1282 to 1308; these read QITS…SLQR and RQAT…YQSD. The span at 1309 to 1321 shows a compositional bias: basic and acidic residues; sequence NGRRQRSGSEGRF. Positions 1349–1370 are enriched in low complexity; it reads PTHPHGHSPTSPRCRSRSPASS.

This sequence belongs to the RAPGEF2 family. In terms of tissue distribution, expressed in hermaphrodite-specific neurons (HSNs), oviduct sheath cells and lateral seam cells.

Acts as a guanine nucleotide exchange factor for small G protein GTPases like rap-1 and rap-2. Required in the hypodermis, especially in the seam cells, for proper formation of the cuticle. This chain is Rap guanine nucleotide exchange factor (pxf-1), found in Caenorhabditis elegans.